We begin with the raw amino-acid sequence, 200 residues long: NADH-quinone oxidoreductase subunit C (200 aa).

It belongs to the complex I 30 kDa subunit family. As to quaternary structure, NDH-1 is composed of 14 different subunits. Subunits NuoB, C, D, E, F, and G constitute the peripheral sector of the complex.

It is found in the cell inner membrane. The enzyme catalyses a quinone + NADH + 5 H(+)(in) = a quinol + NAD(+) + 4 H(+)(out). Functionally, NDH-1 shuttles electrons from NADH, via FMN and iron-sulfur (Fe-S) centers, to quinones in the respiratory chain. The immediate electron acceptor for the enzyme in this species is believed to be ubiquinone. Couples the redox reaction to proton translocation (for every two electrons transferred, four hydrogen ions are translocated across the cytoplasmic membrane), and thus conserves the redox energy in a proton gradient. This chain is NADH-quinone oxidoreductase subunit C, found in Rhizobium etli (strain ATCC 51251 / DSM 11541 / JCM 21823 / NBRC 15573 / CFN 42).